Here is a 152-residue protein sequence, read N- to C-terminus: tRNA-specific adenosine deaminase (152 aa).

The CMP/dCMP-type deaminase domain occupies 2 to 111 (AERTHFMELA…AQDPKGGAVE (110 aa)). Residue His53 participates in Zn(2+) binding. The active-site Proton donor is Glu55. Zn(2+)-binding residues include Cys83 and Cys86.

It belongs to the cytidine and deoxycytidylate deaminase family. As to quaternary structure, homodimer. The cofactor is Zn(2+).

The catalysed reaction is adenosine(34) in tRNA + H2O + H(+) = inosine(34) in tRNA + NH4(+). Functionally, catalyzes the deamination of adenosine to inosine at the wobble position 34 of tRNA(Arg2). The protein is tRNA-specific adenosine deaminase of Agrobacterium fabrum (strain C58 / ATCC 33970) (Agrobacterium tumefaciens (strain C58)).